The following is a 338-amino-acid chain: MADSAQVPALVYLVTGGCGFLGEHIVRMLLEWEPRLRELRVFDLHLSSWLEELKTGPVQVTAIQGDVTQAHEVAAAMAGSHVVIHTAGLVDVFGKASPETIHKVNVQGTQNVIDACVQTGTRLLVYTSSMEVVGPNVKGHPFYRGNEDTPYEAIHRHPYPCSKALAEQLVLEANGRKGLRFGGRLFRAIPASVEHGRVYVGNVAWMHILVARELEQRAALMGGQVYFCYDKSPYKSYEDFNMEFLSPCGLRLIGTHPLLPYWLLVLLTALNALLQWLLRPLVLYTPLLNPYTLAVANTTFTVSTNKAQRHFGYKPLFSWEESRARTIHWVQAMEGSAW.

The Proton acceptor role is filled by tyrosine 159. Lysine 163 is an NAD(+) binding site. 2 helical membrane passes run 258 to 278 (LLPYWLLVLLTALNALLQWLL) and 280 to 300 (PLVLYTPLLNPYTLAVANTTF).

This sequence belongs to the 3-beta-HSD family. As to expression, high levels in liver and lung, moderate levels in spleen, brain, heart, kidney, jejunum and testis. Up-regulated in 3Y1 cells upon growth arrest.

Its subcellular location is the endoplasmic reticulum membrane. It catalyses the reaction 7alpha-hydroxycholesterol + NAD(+) = 7alpha-hydroxycholest-4-en-3-one + NADH + H(+). The catalysed reaction is 7alpha,25-dihydroxycholesterol + NAD(+) = 7alpha,25-dihydroxy-4-cholesten-3-one + NADH + H(+). The enzyme catalyses (25R)-cholest-5-en-3beta,7alpha,26-triol + NAD(+) = (25R)-7alpha,26-dihydroxycholest-4-en-3-one + NADH + H(+). It carries out the reaction (24S)-7alpha-dihydroxycholesterol + NAD(+) = (24S)-7alpha,24-dihydroxycholest-4-en-3-one + NADH + H(+). It functions in the pathway lipid metabolism; steroid biosynthesis. Its function is as follows. The 3-beta-HSD enzymatic system plays a crucial role in the biosynthesis of all classes of hormonal steroids. HSD VII is active against four 7-alpha-hydroxylated sterols. Does not metabolize several different C(19/21) steroids as substrates. Involved in bile acid synthesis. Plays a key role in cell positioning and movement in lymphoid tissues by mediating degradation of 7-alpha,25-dihydroxycholesterol (7-alpha,25-OHC): 7-alpha,25-OHC acts as a ligand for the G protein-coupled receptor GPR183/EBI2, a chemotactic receptor for a number of lymphoid cells. The chain is 3 beta-hydroxysteroid dehydrogenase type 7 from Rattus norvegicus (Rat).